The chain runs to 81 residues: Photosystem I iron-sulfur center (81 aa).

4Fe-4S ferredoxin-type domains are found at residues Ser2–Trp31 and Gly37–Tyr68. Positions 11, 14, 17, 21, 48, 51, 54, and 58 each coordinate [4Fe-4S] cluster.

As to quaternary structure, the eukaryotic PSI reaction center is composed of at least 11 subunits. It depends on [4Fe-4S] cluster as a cofactor.

It is found in the plastid. The protein localises to the chloroplast thylakoid membrane. It carries out the reaction reduced [plastocyanin] + hnu + oxidized [2Fe-2S]-[ferredoxin] = oxidized [plastocyanin] + reduced [2Fe-2S]-[ferredoxin]. Its function is as follows. Apoprotein for the two 4Fe-4S centers FA and FB of photosystem I (PSI); essential for photochemical activity. FB is the terminal electron acceptor of PSI, donating electrons to ferredoxin. The C-terminus interacts with PsaA/B/D and helps assemble the protein into the PSI complex. Required for binding of PsaD and PsaE to PSI. PSI is a plastocyanin/cytochrome c6-ferredoxin oxidoreductase, converting photonic excitation into a charge separation, which transfers an electron from the donor P700 chlorophyll pair to the spectroscopically characterized acceptors A0, A1, FX, FA and FB in turn. This is Photosystem I iron-sulfur center from Euglena gracilis.